A 232-amino-acid chain; its full sequence is Probable ADP-ribosylation factor GTPase-activating protein AGD15 (232 aa).

Positions 16–130 (SKILEALLKH…RWVSPGAIQP (115 aa)) constitute an Arf-GAP domain. The C4-type zinc-finger motif lies at 31–54 (CADCRSKAPRWASVNLGIFICMQC). A disordered region spans residues 203–232 (PNQKNENFSSEVNQNRRTTIAPPSSWATFD). Over residues 206 to 232 (KNENFSSEVNQNRRTTIAPPSSWATFD) the composition is skewed to polar residues.

Functionally, GTPase-activating protein (GAP) for ADP ribosylation factor (ARF). This Arabidopsis thaliana (Mouse-ear cress) protein is Probable ADP-ribosylation factor GTPase-activating protein AGD15 (AGD15).